The primary structure comprises 384 residues: S-adenosylmethionine synthase (384 aa).

His15 provides a ligand contact to ATP. Asp17 is a binding site for Mg(2+). Residue Glu43 coordinates K(+). L-methionine contacts are provided by Glu56 and Gln99. Residues 99 to 109 (QSPDINQGVDR) are flexible loop. ATP contacts are provided by residues 164–166 (DAK), 230–231 (RF), Asp239, 245–246 (RK), Ala262, and Lys266. Asp239 serves as a coordination point for L-methionine. Lys270 contacts L-methionine.

Belongs to the AdoMet synthase family. Homotetramer; dimer of dimers. Requires Mg(2+) as cofactor. The cofactor is K(+).

It is found in the cytoplasm. It catalyses the reaction L-methionine + ATP + H2O = S-adenosyl-L-methionine + phosphate + diphosphate. Its pathway is amino-acid biosynthesis; S-adenosyl-L-methionine biosynthesis; S-adenosyl-L-methionine from L-methionine: step 1/1. Functionally, catalyzes the formation of S-adenosylmethionine (AdoMet) from methionine and ATP. The overall synthetic reaction is composed of two sequential steps, AdoMet formation and the subsequent tripolyphosphate hydrolysis which occurs prior to release of AdoMet from the enzyme. This Cronobacter sakazakii (strain ATCC BAA-894) (Enterobacter sakazakii) protein is S-adenosylmethionine synthase.